Here is a 174-residue protein sequence, read N- to C-terminus: Peptide methionine sulfoxide reductase MsrA (174 aa).

C10 is a catalytic residue.

The protein belongs to the MsrA Met sulfoxide reductase family.

The catalysed reaction is L-methionyl-[protein] + [thioredoxin]-disulfide + H2O = L-methionyl-(S)-S-oxide-[protein] + [thioredoxin]-dithiol. It carries out the reaction [thioredoxin]-disulfide + L-methionine + H2O = L-methionine (S)-S-oxide + [thioredoxin]-dithiol. Its function is as follows. Has an important function as a repair enzyme for proteins that have been inactivated by oxidation. Catalyzes the reversible oxidation-reduction of methionine sulfoxide in proteins to methionine. The sequence is that of Peptide methionine sulfoxide reductase MsrA from Acinetobacter baumannii (strain SDF).